The primary structure comprises 349 residues: Phosphoribosylformylglycinamidine cyclo-ligase (349 aa).

The protein belongs to the AIR synthase family.

It is found in the cytoplasm. It catalyses the reaction 2-formamido-N(1)-(5-O-phospho-beta-D-ribosyl)acetamidine + ATP = 5-amino-1-(5-phospho-beta-D-ribosyl)imidazole + ADP + phosphate + H(+). It participates in purine metabolism; IMP biosynthesis via de novo pathway; 5-amino-1-(5-phospho-D-ribosyl)imidazole from N(2)-formyl-N(1)-(5-phospho-D-ribosyl)glycinamide: step 2/2. This is Phosphoribosylformylglycinamidine cyclo-ligase from Trichlorobacter lovleyi (strain ATCC BAA-1151 / DSM 17278 / SZ) (Geobacter lovleyi).